The chain runs to 229 residues: Large ribosomal subunit protein uL1 (229 aa).

The protein belongs to the universal ribosomal protein uL1 family. Part of the 50S ribosomal subunit.

Its function is as follows. Binds directly to 23S rRNA. The L1 stalk is quite mobile in the ribosome, and is involved in E site tRNA release. In terms of biological role, protein L1 is also a translational repressor protein, it controls the translation of the L11 operon by binding to its mRNA. In Clostridium botulinum (strain Loch Maree / Type A3), this protein is Large ribosomal subunit protein uL1.